The chain runs to 501 residues: Glutamyl-tRNA(Gln) amidotransferase subunit A (501 aa).

Residues Lys-84 and Ser-159 each act as charge relay system in the active site. Ser-183 functions as the Acyl-ester intermediate in the catalytic mechanism.

Belongs to the amidase family. GatA subfamily. In terms of assembly, heterotrimer of A, B and C subunits.

It carries out the reaction L-glutamyl-tRNA(Gln) + L-glutamine + ATP + H2O = L-glutaminyl-tRNA(Gln) + L-glutamate + ADP + phosphate + H(+). In terms of biological role, allows the formation of correctly charged Gln-tRNA(Gln) through the transamidation of misacylated Glu-tRNA(Gln) in organisms which lack glutaminyl-tRNA synthetase. The reaction takes place in the presence of glutamine and ATP through an activated gamma-phospho-Glu-tRNA(Gln). This is Glutamyl-tRNA(Gln) amidotransferase subunit A from Streptomyces avermitilis (strain ATCC 31267 / DSM 46492 / JCM 5070 / NBRC 14893 / NCIMB 12804 / NRRL 8165 / MA-4680).